Consider the following 249-residue polypeptide: Proline-rich antigen (249 aa).

2 stretches are compositionally biased toward pro residues: residues 1–20 and 38–87; these read MTDQPPPSGSNPTPAPPPPG and YPPP…PPGP. The segment at 1–87 is disordered; that stretch reads MTDQPPPSGS…GAYAPPPPGP (87 aa). The 1-1; approximate repeat unit spans residues 34 to 43; it reads LGSAYPPPTA. Residues 34-85 are 5 X 10 AA tandem repeats of [PV]-G-G-S-Y-P-P-P-P-P; sequence LGSAYPPPTAPPVGGSYPPPPPPGGSYPPPPPPGGSYPPPPPSTGAYAPPPP. Repeat copies occupy residues 46–55, 56–65, and 66–75. Residues 76-85 form a 1-5; approximate repeat; the sequence is STGAYAPPPP. An RDD domain is found at 99 to 242; the sequence is FWVTRVLAYV…KRQTLADKIM (144 aa). A run of 2 repeats spans residues 101–123 and 134–156. The segment at 101–156 is 2 X 23 AA approximate repeats; it reads VTRVLAYVIDNIPATVLLGIGMLIQTLTKQEACVTDITQYNVNQYCATQPTGIGML. The next 3 helical transmembrane spans lie at 104-124, 151-171, and 212-232; these read VLAYVIDNIPATVLLGIGMLI, TGIGMLAFWFAWLMATAYLVW, and LAHFVDAVICCIGFLFPLWDS.

Belongs to the mycobacterial Pra family.

Its subcellular location is the cell membrane. This Mycobacterium leprae (strain TN) protein is Proline-rich antigen (ag36).